Here is a 264-residue protein sequence, read N- to C-terminus: S-adenosylmethionine decarboxylase proenzyme (264 aa).

Residue S113 is the Schiff-base intermediate with substrate; via pyruvic acid of the active site. S113 carries the pyruvic acid (Ser); by autocatalysis modification. The active-site Proton acceptor; for processing activity is H118. C141 (proton donor; for catalytic activity) is an active-site residue.

The protein belongs to the prokaryotic AdoMetDC family. Type 2 subfamily. As to quaternary structure, heterooctamer of four alpha and four beta chains arranged as a tetramer of alpha/beta heterodimers. Pyruvate is required as a cofactor. Is synthesized initially as an inactive proenzyme. Formation of the active enzyme involves a self-maturation process in which the active site pyruvoyl group is generated from an internal serine residue via an autocatalytic post-translational modification. Two non-identical subunits are generated from the proenzyme in this reaction, and the pyruvate is formed at the N-terminus of the alpha chain, which is derived from the carboxyl end of the proenzyme. The post-translation cleavage follows an unusual pathway, termed non-hydrolytic serinolysis, in which the side chain hydroxyl group of the serine supplies its oxygen atom to form the C-terminus of the beta chain, while the remainder of the serine residue undergoes an oxidative deamination to produce ammonia and the pyruvoyl group blocking the N-terminus of the alpha chain.

It carries out the reaction S-adenosyl-L-methionine + H(+) = S-adenosyl 3-(methylsulfanyl)propylamine + CO2. The protein operates within amine and polyamine biosynthesis; S-adenosylmethioninamine biosynthesis; S-adenosylmethioninamine from S-adenosyl-L-methionine: step 1/1. Catalyzes the decarboxylation of S-adenosylmethionine to S-adenosylmethioninamine (dcAdoMet), the propylamine donor required for the synthesis of the polyamines spermine and spermidine from the diamine putrescine. This chain is S-adenosylmethionine decarboxylase proenzyme, found in Hahella chejuensis (strain KCTC 2396).